The chain runs to 138 residues: Nucleoside diphosphate kinase (138 aa).

ATP contacts are provided by Lys9, Phe57, Arg85, Thr91, Arg102, and Asn112. His120 functions as the Pros-phosphohistidine intermediate in the catalytic mechanism.

It belongs to the NDK family. In terms of assembly, homotetramer. Requires Mg(2+) as cofactor.

The protein resides in the cytoplasm. The enzyme catalyses a 2'-deoxyribonucleoside 5'-diphosphate + ATP = a 2'-deoxyribonucleoside 5'-triphosphate + ADP. It carries out the reaction a ribonucleoside 5'-diphosphate + ATP = a ribonucleoside 5'-triphosphate + ADP. Functionally, major role in the synthesis of nucleoside triphosphates other than ATP. The ATP gamma phosphate is transferred to the NDP beta phosphate via a ping-pong mechanism, using a phosphorylated active-site intermediate. This is Nucleoside diphosphate kinase from Streptococcus agalactiae serotype III (strain NEM316).